Reading from the N-terminus, the 247-residue chain is UPF0309 protein GWCH70_1414 (247 aa).

The SIS domain maps to 31 to 214 (VSEAIQKGGI…VLMAENGFEP (184 aa)).

Belongs to the UPF0309 family.

The sequence is that of UPF0309 protein GWCH70_1414 from Geobacillus sp. (strain WCH70).